The chain runs to 548 residues: Thermosome subunit alpha (548 aa).

The interval 527 to 548 (TKPEGGQGGGMPGGMGGMDMGM) is disordered. Over residues 531-548 (GGQGGGMPGGMGGMDMGM) the composition is skewed to gly residues.

Belongs to the TCP-1 chaperonin family. In terms of assembly, forms a Heterooligomeric complex of two stacked eight-membered rings.

Its function is as follows. Molecular chaperone; binds unfolded polypeptides in vitro, and has a weak ATPase activity. This is Thermosome subunit alpha (thsA) from Thermococcus sp. (strain JCM 11816 / KS-1).